Consider the following 163-residue polypeptide: Regulatory protein RecX (163 aa).

Positions 1–21 are disordered; it reads MSDAEDIPTGRKRRPREQTPV.

This sequence belongs to the RecX family.

It is found in the cytoplasm. Its function is as follows. Modulates RecA activity. The polypeptide is Regulatory protein RecX (Stenotrophomonas maltophilia (strain R551-3)).